A 452-amino-acid polypeptide reads, in one-letter code: 1,4-beta-D-glucan cellobiohydrolase A (452 aa).

Residues 1–17 form the signal peptide; it reads MHQRALLFSALLTAVRA. N-linked (GlcNAc...) asparagine glycosylation occurs at N62. Residue E227 is the Nucleophile of the active site. E232 serves as the catalytic Proton donor. N-linked (GlcNAc...) asparagine glycans are attached at residues N285, N335, N402, and N445.

Belongs to the glycosyl hydrolase 7 (cellulase C) family.

The protein resides in the secreted. The catalysed reaction is Hydrolysis of (1-&gt;4)-beta-D-glucosidic linkages in cellulose and cellotetraose, releasing cellobiose from the non-reducing ends of the chains.. Its function is as follows. The biological conversion of cellulose to glucose generally requires three types of hydrolytic enzymes: (1) Endoglucanases which cut internal beta-1,4-glucosidic bonds; (2) Exocellobiohydrolases that cut the disaccharide cellobiose from the non-reducing end of the cellulose polymer chain; (3) Beta-1,4-glucosidases which hydrolyze the cellobiose and other short cello-oligosaccharides to glucose. This is 1,4-beta-D-glucan cellobiohydrolase A (cbhA) from Aspergillus niger.